The following is a 162-amino-acid chain: Proepiregulin (162 aa).

A signal peptide spans 1-22 (METFPAAWVLALLCLGSHLLQA). Positions 23–55 (VISTTVIPSCIPEESEDNCTALVQMEDDPRVAQ) are excised as a propeptide. N-linked (GlcNAc...) asparagine glycosylation occurs at Asn-40. One can recognise an EGF-like domain in the interval 57-97 (LITKCSSDMDGYCLHGHCIYLVDMSEKYCRCEVGYTGLRCE). 3 cysteine pairs are disulfide-bonded: Cys-61–Cys-74, Cys-69–Cys-85, and Cys-87–Cys-96. The propeptide at 102–162 (TVHQPLSREY…TSGGPGLPQV (61 aa)) is removed in mature form. A helical transmembrane segment spans residues 113-133 (ALTVILVFLFLIVTAGSMYYF).

As to quaternary structure, interacts with EGFR and ERBB4.

It localises to the secreted. Its subcellular location is the extracellular space. The protein resides in the cell membrane. Its function is as follows. Ligand of the EGF receptor/EGFR and ERBB4. Stimulates EGFR and ERBB4 tyrosine phosphorylation. Contributes to inflammation, wound healing, tissue repair, and oocyte maturation by regulating angiogenesis and vascular remodeling and by stimulating cell proliferation. The protein is Proepiregulin (Ereg) of Rattus norvegicus (Rat).